The primary structure comprises 588 residues: Ribonuclease Y (588 aa).

The helical transmembrane segment at 7–27 (VLLVAVLLLTVVVVGAVLVGV) threads the bilayer. The region spanning 278-359 (VVSVLHLPGD…HRIEEVHDLA (82 aa)) is the KH domain. Positions 404–497 (VLKHLVESAH…TQASDACSGG (94 aa)) constitute an HD domain.

The protein belongs to the RNase Y family.

The protein resides in the cell membrane. Its function is as follows. Endoribonuclease that initiates mRNA decay. This Salinispora tropica (strain ATCC BAA-916 / DSM 44818 / JCM 13857 / NBRC 105044 / CNB-440) protein is Ribonuclease Y.